A 1033-amino-acid polypeptide reads, in one-letter code: DNA polymerase I A, chloroplastic (1033 aa).

A compositionally biased stretch (pro residues) spans 1–11 (MAVAPPLPPAP). 2 disordered regions span residues 1–32 (MAVA…LSSP) and 104–142 (TNGT…PSNS). Residues 1–55 (MAVAPPLPPAPARQLRRWKGSSPRPPPWLSSPFRRTRYLSRPAFAAGGRQDYSPS) constitute a chloroplast transit peptide. The segment covering 115–124 (LRHDPSEDIR) has biased composition (basic and acidic residues). Positions 125 to 142 (SSNYPSLYNQRERGPSNS) are enriched in polar residues. The 3'-5' exonuclease domain occupies 321–482 (FGNGKTCIWV…LYESLKNKLE (162 aa)). The tract at residues 696 to 1030 (CHAIAALCEV…VDAKYAKSWY (335 aa)) is polymerase.

It belongs to the DNA polymerase type-A family. Expressed in shoot apical meristem, root apical meristem, leaf primordia and the marginal meristem.

The protein resides in the plastid. It localises to the chloroplast. The enzyme catalyses DNA(n) + a 2'-deoxyribonucleoside 5'-triphosphate = DNA(n+1) + diphosphate. With respect to regulation, inhibited by dideoxythymidine-triphosphate (ddTTP), but not by aphidicolin and N-ethylmaleimide. Its function is as follows. In addition to polymerase activity, this DNA polymerase exhibits 5'-3' exonuclease activity. May be required for DNA replication and accumulation in plastids. The sequence is that of DNA polymerase I A, chloroplastic from Oryza sativa subsp. japonica (Rice).